The sequence spans 322 residues: Probable cAMP-dependent protein kinase catalytic subunit (322 aa).

Residues 7 to 261 form the Protein kinase domain; the sequence is FEFVKVVGVG…ICEIMGHPFF (255 aa). Residues 13–21 and lysine 37 each bind ATP; that span reads VGVGAFGKV. Aspartate 132 serves as the catalytic Proton acceptor. The AGC-kinase C-terminal domain maps to 262–322; the sequence is KGIDWHEVES…KHLYKVSKGL (61 aa).

This sequence belongs to the protein kinase superfamily. AGC Ser/Thr protein kinase family. cAMP subfamily.

It catalyses the reaction L-seryl-[protein] + ATP = O-phospho-L-seryl-[protein] + ADP + H(+). It carries out the reaction L-threonyl-[protein] + ATP = O-phospho-L-threonyl-[protein] + ADP + H(+). In Encephalitozoon cuniculi (strain GB-M1) (Microsporidian parasite), this protein is Probable cAMP-dependent protein kinase catalytic subunit.